Consider the following 613-residue polypeptide: Phosphomethylpyrimidine synthase (613 aa).

Substrate-binding positions include asparagine 215, methionine 244, tyrosine 273, histidine 309, 329–331 (SRG), 370–373 (DGLR), and glutamate 409. Residue histidine 413 coordinates Zn(2+). Position 436 (tyrosine 436) interacts with substrate. Histidine 477 contributes to the Zn(2+) binding site. [4Fe-4S] cluster is bound by residues cysteine 557, cysteine 560, and cysteine 565.

The protein belongs to the ThiC family. Homodimer. The cofactor is [4Fe-4S] cluster.

The enzyme catalyses 5-amino-1-(5-phospho-beta-D-ribosyl)imidazole + S-adenosyl-L-methionine = 4-amino-2-methyl-5-(phosphooxymethyl)pyrimidine + CO + 5'-deoxyadenosine + formate + L-methionine + 3 H(+). The protein operates within cofactor biosynthesis; thiamine diphosphate biosynthesis. Functionally, catalyzes the synthesis of the hydroxymethylpyrimidine phosphate (HMP-P) moiety of thiamine from aminoimidazole ribotide (AIR) in a radical S-adenosyl-L-methionine (SAM)-dependent reaction. The chain is Phosphomethylpyrimidine synthase from Paramagnetospirillum magneticum (strain ATCC 700264 / AMB-1) (Magnetospirillum magneticum).